Consider the following 382-residue polypeptide: MIKSALLVLEDGTQFHGRAIGAEGLAVGEVVFNTSMTGYQEILTDPSYSRQIVTLTYPHIGNVGANANDEESPSVQAQGLVIRDLPLIASNYRSEESLSEYLKRNNIVAIADIDTRKLTRLLREKGAQNGCIIAGDAPDAVVALEKAKAFPGLKGMDLAKEVTTAESYSWLQGSWTLEGELPAAKNESELPYHVVAYDYGVKRNILRMLVDRGCRLTVVPAQTPAEDVLKLNPDGIFLSNGPGDPEPCDYAIRAIKTFLETGIPVFGICLGHQLLALASGAKTTKMKLGHHGGNHPVKDLDNNCVMITAQNHGFAVDEDNLPDTLRVTHKSLFDHTVQGIHRTDKPAFSFQGHPEASPGPHDAAPLFDHFIDLIQTYRSSAK.

A CPSase region spans residues 1 to 189 (MIKSALLVLE…ELPAAKNESE (189 aa)). L-glutamine contacts are provided by serine 47, glycine 241, and glycine 243. Residues 193 to 380 (HVVAYDYGVK…IDLIQTYRSS (188 aa)) form the Glutamine amidotransferase type-1 domain. Cysteine 269 functions as the Nucleophile in the catalytic mechanism. Positions 270, 273, 311, 313, and 314 each coordinate L-glutamine. Residues histidine 353 and glutamate 355 contribute to the active site.

It belongs to the CarA family. In terms of assembly, composed of two chains; the small (or glutamine) chain promotes the hydrolysis of glutamine to ammonia, which is used by the large (or ammonia) chain to synthesize carbamoyl phosphate. Tetramer of heterodimers (alpha,beta)4.

The enzyme catalyses hydrogencarbonate + L-glutamine + 2 ATP + H2O = carbamoyl phosphate + L-glutamate + 2 ADP + phosphate + 2 H(+). It carries out the reaction L-glutamine + H2O = L-glutamate + NH4(+). It participates in amino-acid biosynthesis; L-arginine biosynthesis; carbamoyl phosphate from bicarbonate: step 1/1. The protein operates within pyrimidine metabolism; UMP biosynthesis via de novo pathway; (S)-dihydroorotate from bicarbonate: step 1/3. Functionally, small subunit of the glutamine-dependent carbamoyl phosphate synthetase (CPSase). CPSase catalyzes the formation of carbamoyl phosphate from the ammonia moiety of glutamine, carbonate, and phosphate donated by ATP, constituting the first step of 2 biosynthetic pathways, one leading to arginine and/or urea and the other to pyrimidine nucleotides. The small subunit (glutamine amidotransferase) binds and cleaves glutamine to supply the large subunit with the substrate ammonia. In Pectobacterium atrosepticum (strain SCRI 1043 / ATCC BAA-672) (Erwinia carotovora subsp. atroseptica), this protein is Carbamoyl phosphate synthase small chain.